A 234-amino-acid polypeptide reads, in one-letter code: Sugar fermentation stimulation protein A (234 aa).

Residues 201 to 220 (LLSEAQQRGVEILAYKAELS) constitute a DNA-binding region (H-T-H motif).

Belongs to the SfsA family.

Its function is as follows. Binds to DNA non-specifically. Could be a regulatory factor involved in maltose metabolism. This chain is Sugar fermentation stimulation protein A, found in Escherichia coli O127:H6 (strain E2348/69 / EPEC).